The primary structure comprises 1211 residues: Periplasmic acid trehalase ATC1 (1211 aa).

Residues 1 to 46 lie on the Cytoplasmic side of the membrane; that stretch reads MKRIRSLWFNAEASYSNLNNSPSLRNKNSTGNNSRSKNYRSFSRFD. Residues 47 to 67 traverse the membrane as a helical segment; sequence LINSILLLMMLFLLAIFVTAL. At 68 to 1211 the chain is on the periplasmic side; it reads YLTKSSRLTY…ATIKEIVLND (1144 aa). A required for cell surface targeting region spans residues 70-131; that stretch reads TKSSRLTYSH…NTAYYDDENM (62 aa). N-linked (GlcNAc...) asparagine glycans are attached at residues asparagine 98, asparagine 207, asparagine 238, asparagine 247, asparagine 255, asparagine 259, asparagine 325, asparagine 370, asparagine 376, and asparagine 488. 513 to 514 serves as a coordination point for substrate; the sequence is WD. Asparagine 539, asparagine 568, asparagine 628, and asparagine 638 each carry an N-linked (GlcNAc...) asparagine glycan. Glutamate 644 serves as the catalytic Proton donor. Asparagine 696 and asparagine 705 each carry an N-linked (GlcNAc...) asparagine glycan. 711 to 712 lines the substrate pocket; it reads KQ. 10 N-linked (GlcNAc...) asparagine glycosylation sites follow: asparagine 879, asparagine 897, asparagine 910, asparagine 972, asparagine 990, asparagine 1031, asparagine 1049, asparagine 1064, asparagine 1147, and asparagine 1157.

The protein belongs to the glycosyl hydrolase 65 family. In terms of processing, glycosylated.

The protein resides in the membrane. Its subcellular location is the vacuole lumen. It localises to the periplasm. The enzyme catalyses alpha,alpha-trehalose + H2O = alpha-D-glucose + beta-D-glucose. Periplasmic acid trehalase that catalyzes hydrolysis of the disaccharide trehalose and required for growth on trehalose as carbon source. Growth on trehalose is strictly respiratory. In Saccharomyces cerevisiae (strain CEN.PK113-7D) (Baker's yeast), this protein is Periplasmic acid trehalase ATC1.